The chain runs to 154 residues: MIITTWIMYILARKSIGLPFPPRVNSDIEVEETEAVSVVQHWLNKTEEEASRSIKEKISINDPCTQGHDIHVTRDLVKHRLSKCDMLTDPNQEVLEERTRIQFIRWSHTRIFQVPSEMMDDVIQERIDQVRRSVSHLRCDSSSDPCYRNSCSEC.

A mitochondrion-targeting transit peptide spans 1 to 24; that stretch reads MIITTWIMYILARKSIGLPFPPRV. Residues Ser-26 and Ser-116 each carry the phosphoserine modification.

As to expression, expressed in the testis.

Its subcellular location is the mitochondrion outer membrane. It is found in the mitochondrion. The protein resides in the cell projection. The protein localises to the cilium. It localises to the flagellum. Functionally, essential for sperm motility and male fertility. Plays an important role in sperm motility by regulating the organization and function of the mitochondria and is also required for correct sperm midpiece assembly. The polypeptide is Spermatogenesis-associated protein 19, mitochondrial (Spata19) (Rattus norvegicus (Rat)).